The sequence spans 136 residues: ATP synthase epsilon chain (136 aa).

The interval 106 to 136 (MEGQPSSPEKLKAQQQLNEARARLQASKTAD) is disordered.

The protein belongs to the ATPase epsilon chain family. F-type ATPases have 2 components, CF(1) - the catalytic core - and CF(0) - the membrane proton channel. CF(1) has five subunits: alpha(3), beta(3), gamma(1), delta(1), epsilon(1). CF(0) has three main subunits: a, b and c.

It localises to the cellular thylakoid membrane. Produces ATP from ADP in the presence of a proton gradient across the membrane. In Synechococcus sp. (strain CC9605), this protein is ATP synthase epsilon chain.